We begin with the raw amino-acid sequence, 349 residues long: UDP-N-acetylenolpyruvoylglucosamine reductase (349 aa).

In terms of domain architecture, FAD-binding PCMH-type spans 25-197 (GIAARARFAA…VAVTFRLPKQ (173 aa)). The active site involves Arg173. Catalysis depends on Ser249, which acts as the Proton donor. Glu345 is an active-site residue.

It belongs to the MurB family. It depends on FAD as a cofactor.

The protein localises to the cytoplasm. The catalysed reaction is UDP-N-acetyl-alpha-D-muramate + NADP(+) = UDP-N-acetyl-3-O-(1-carboxyvinyl)-alpha-D-glucosamine + NADPH + H(+). It functions in the pathway cell wall biogenesis; peptidoglycan biosynthesis. Functionally, cell wall formation. The chain is UDP-N-acetylenolpyruvoylglucosamine reductase from Burkholderia cenocepacia (strain HI2424).